The sequence spans 388 residues: Succinate--CoA ligase [ADP-forming] subunit beta (388 aa).

Positions 9 to 244 (KQLFAEYGLP…PSQDDAREAH (236 aa)) constitute an ATP-grasp domain. Residues Lys46, 53 to 55 (GRG), Glu99, Thr102, and Glu107 contribute to the ATP site. Residues Asn199 and Asp213 each coordinate Mg(2+). Substrate-binding positions include Asn264 and 321 to 323 (GIV).

The protein belongs to the succinate/malate CoA ligase beta subunit family. As to quaternary structure, heterotetramer of two alpha and two beta subunits. It depends on Mg(2+) as a cofactor.

The catalysed reaction is succinate + ATP + CoA = succinyl-CoA + ADP + phosphate. The enzyme catalyses GTP + succinate + CoA = succinyl-CoA + GDP + phosphate. It participates in carbohydrate metabolism; tricarboxylic acid cycle; succinate from succinyl-CoA (ligase route): step 1/1. In terms of biological role, succinyl-CoA synthetase functions in the citric acid cycle (TCA), coupling the hydrolysis of succinyl-CoA to the synthesis of either ATP or GTP and thus represents the only step of substrate-level phosphorylation in the TCA. The beta subunit provides nucleotide specificity of the enzyme and binds the substrate succinate, while the binding sites for coenzyme A and phosphate are found in the alpha subunit. This chain is Succinate--CoA ligase [ADP-forming] subunit beta, found in Pseudomonas paraeruginosa (strain DSM 24068 / PA7) (Pseudomonas aeruginosa (strain PA7)).